The primary structure comprises 247 residues: MSRKFCVGGNWKMNGDQKSIAEIAKTLSSAALDPNTEVVIGCPAIYLMYARNLLPCELGLAGQNAYKVAKGAFTGEISPAMLKDIGADWVILGHSERRAIFGESDALIAEKAEHALAEGLKVIACIGETLEEREAGKTNEVVARQMCAYAQKIKDWKNVVVAYEPVWAIGTGQTATPDQAQEVHAFLRQWLSDNISKEVSASLRIQYGGSVTAANAKELAKKPDIDGFLVGGASLKPEFVDIINARQ.

Substrate contacts are provided by asparagine 10 and lysine 12. Catalysis depends on histidine 94, which acts as the Electrophile. Glutamate 164 functions as the Proton acceptor in the catalytic mechanism.

Belongs to the triosephosphate isomerase family. In terms of assembly, homodimer.

The enzyme catalyses D-glyceraldehyde 3-phosphate = dihydroxyacetone phosphate. It functions in the pathway carbohydrate biosynthesis; gluconeogenesis. Its pathway is carbohydrate degradation; glycolysis; D-glyceraldehyde 3-phosphate from glycerone phosphate: step 1/1. The protein is Triosephosphate isomerase (Tpi) of Drosophila melanogaster (Fruit fly).